Here is a 116-residue protein sequence, read N- to C-terminus: Transcription elongation factor SPT4 homolog 2 (116 aa).

The C4-type zinc finger occupies C19–C39.

It belongs to the SPT4 family.

It localises to the nucleus. Its function is as follows. May regulate transcription elongation by RNA polymerase II. May enhance transcriptional pausing at sites proximal to the promoter, which may in turn facilitate the assembly of an elongation competent RNA polymerase II complex. The sequence is that of Transcription elongation factor SPT4 homolog 2 from Arabidopsis thaliana (Mouse-ear cress).